The sequence spans 602 residues: Glutamine--fructose-6-phosphate aminotransferase [isomerizing] (602 aa).

Cysteine 2 functions as the Nucleophile; for GATase activity in the catalytic mechanism. One can recognise a Glutamine amidotransferase type-2 domain in the interval 2–219; that stretch reads CGIIGYIGDR…DGEYAILTKD (218 aa). 2 SIS domains span residues 280 to 420 and 453 to 592; these read VAEE…VLGT and LAET…PDKP. Lysine 597 serves as the catalytic For Fru-6P isomerization activity.

Homodimer.

Its subcellular location is the cytoplasm. It carries out the reaction D-fructose 6-phosphate + L-glutamine = D-glucosamine 6-phosphate + L-glutamate. Its function is as follows. Catalyzes the first step in hexosamine metabolism, converting fructose-6P into glucosamine-6P using glutamine as a nitrogen source. This chain is Glutamine--fructose-6-phosphate aminotransferase [isomerizing], found in Thermococcus kodakarensis (strain ATCC BAA-918 / JCM 12380 / KOD1) (Pyrococcus kodakaraensis (strain KOD1)).